The chain runs to 4763 residues: Nonribosomal peptide synthetase sidC (4763 aa).

The interval 1–24 (MAGTANPADEGLTGPTETTNHINS) is disordered. Residues 15–24 (PTETTNHINS) are compositionally biased toward polar residues. Positions 296–815 (STVAEHSTLT…SSGKVDRNSI (520 aa)) are adenylation 1. Positions 853-930 (EKALELRTLV…GLLTLILNGK (78 aa)) constitute a Carrier 1 domain. S890 carries the post-translational modification O-(pantetheine 4'-phosphoryl)serine. Positions 1003 to 1396 (TRSYIYHSVI…DIIAFILQNP (394 aa)) are condensation 1. An adenylation 2 region spans residues 1398-1951 (GDFENALLYT…AKTDRRALQA (554 aa)). Residues 1979 to 2055 (LVASDAMEKI…DLARLCTSSS (77 aa)) form the Carrier 2 domain. Residue S2016 is modified to O-(pantetheine 4'-phosphoryl)serine. The tract at residues 2092–2423 (TPIQESLLSE…HIHAREVRRM (332 aa)) is condensation 2. Positions 2556 to 3070 (ELNAREHPEW…MSGKANIKEL (515 aa)) are adenylation 3. The Carrier 3 domain occupies 3099-3175 (RPLSSDEEAV…QLAQLPRKST (77 aa)). The residue at position 3136 (S3136) is an O-(pantetheine 4'-phosphoryl)serine. The tract at residues 3217–3626 (PLQEGLVARS…DDIALDSFSL (410 aa)) is condensation 3. In terms of domain architecture, Carrier 4 spans 3647–3720 (SATETKIRDL…ALAEHVDERS (74 aa)). O-(pantetheine 4'-phosphoryl)serine is present on S3681. The segment at 3761–4093 (TPLQAGMITR…SLFDTLFVFQ (333 aa)) is condensation 4. The 74-residue stretch at 4204 to 4277 (PAHESIIRDV…GISARIISPV (74 aa)) folds into the Carrier 5 domain. Residue S4238 is modified to O-(pantetheine 4'-phosphoryl)serine. The interval 4344-4593 (ERIDSGKLEE…PCLNVTPFTF (250 aa)) is condensation 5.

Belongs to the NRP synthetase family.

It functions in the pathway siderophore biosynthesis. Functionally, nonribosomal peptide synthase; part of the siderophore biosynthetic pathway. Aspergillus fumigatus produces four types of siderophores, low-molecular-mass iron chelators, including excreted fusarinine C (FsC) and triacetylfusarinine C (TAFC) for iron uptake; and intacellular ferricrocin (FC) for hyphal and hydroxyferricrocin (HFC) for conidial iron distribution and storage. TAFC consists of three N(2)-acetyl-N(5)-anhydromevalonyl-N(5)-hydroxyornithine residues cyclically linked by ester bonds; FC is a cyclic hexapeptide with the structure Gly-Ser-Gly-(N(5)-acetyl-N(5)-hydroxyornithine)x3. The biosynthesis of all four siderophores depends on the hydroxylation of ornithine, catalyzed by the monooxygenase sidA. Subsequently, the pathways for biosynthesis of extra- and intracellular siderophores split. For biosynthesis of extracellular siderophores, the transacylase sidF transfers anhydromevalonyl to N(5)-hydroxyornithine. The required anhydromevalonyl-CoA moiety is derived from mevalonate by CoA ligation and dehydration catalyzed by sidI and sidH respectively. The acetylation of N(5)-hydroxyornithine for FC biosynthesis involves the constitutively expressed sidL. FC is hydroxylated to HFC by an as yet uncharacterized enzyme during conidiation. Assembly of fusarinine C (FsC) and FC is catalyzed by two different nonribosomal peptide synthetases (NRPS), sidD and sidC respectively. Subsequently, sidG catalyzes N2-acetylation of FsC for forming TAFC. Both extra- and intracellular siderophores are crucial for growth during iron limitation and virulence. The polypeptide is Nonribosomal peptide synthetase sidC (Aspergillus fumigatus (strain ATCC MYA-4609 / CBS 101355 / FGSC A1100 / Af293) (Neosartorya fumigata)).